A 555-amino-acid chain; its full sequence is Chaperonin GroEL 2 (555 aa).

ATP contacts are provided by residues 29 to 32, 86 to 90, glycine 414, 480 to 482, and aspartate 496; these read TLGP, DGTTT, and NAL.

It belongs to the chaperonin (HSP60) family. Forms a cylinder of 14 subunits composed of two heptameric rings stacked back-to-back. Interacts with the co-chaperonin GroES.

The protein resides in the cytoplasm. The catalysed reaction is ATP + H2O + a folded polypeptide = ADP + phosphate + an unfolded polypeptide.. Functionally, together with its co-chaperonin GroES, plays an essential role in assisting protein folding. The GroEL-GroES system forms a nano-cage that allows encapsulation of the non-native substrate proteins and provides a physical environment optimized to promote and accelerate protein folding. The protein is Chaperonin GroEL 2 of Synechococcus sp. (strain ATCC 27144 / PCC 6301 / SAUG 1402/1) (Anacystis nidulans).